The sequence spans 166 residues: Cyclin-dependent kinase 4 inhibitor D (166 aa).

An N-acetylmethionine modification is found at M1. ANK repeat units follow at residues 41–69, 73–102, 106–135, and 138–166; these read FGKT…SPNV, SGTS…DVNV, TGAL…LHRR, and RGLT…VAPL.

The protein belongs to the CDKN2 cyclin-dependent kinase inhibitor family. Interacts with CDK6.

It is found in the nucleus. The protein localises to the cytoplasm. In terms of biological role, interacts strongly with CDK4 and CDK6 and inhibits them. This is Cyclin-dependent kinase 4 inhibitor D (CDKN2D) from Homo sapiens (Human).